The primary structure comprises 188 residues: Elongation factor P (188 aa).

It belongs to the elongation factor P family.

The protein resides in the cytoplasm. Its pathway is protein biosynthesis; polypeptide chain elongation. Its function is as follows. Involved in peptide bond synthesis. Stimulates efficient translation and peptide-bond synthesis on native or reconstituted 70S ribosomes in vitro. Probably functions indirectly by altering the affinity of the ribosome for aminoacyl-tRNA, thus increasing their reactivity as acceptors for peptidyl transferase. The protein is Elongation factor P of Rickettsia bellii (strain OSU 85-389).